The chain runs to 357 residues: Homoserine kinase (357 aa).

The protein belongs to the GHMP kinase family. Homoserine kinase subfamily. In terms of assembly, homodimer.

It catalyses the reaction L-homoserine + ATP = O-phospho-L-homoserine + ADP + H(+). The protein operates within amino-acid biosynthesis; L-threonine biosynthesis; L-threonine from L-aspartate: step 4/5. Functionally, commits homoserine to the threonine biosynthesis pathway by catalyzing its O-phosphorylation. This is Homoserine kinase (THR1) from Candida albicans (strain SC5314 / ATCC MYA-2876) (Yeast).